Here is a 412-residue protein sequence, read N- to C-terminus: Putative competence-damage inducible protein (412 aa).

Belongs to the CinA family.

This chain is Putative competence-damage inducible protein, found in Clostridium perfringens (strain SM101 / Type A).